The primary structure comprises 198 residues: Putative peptidyl-prolyl cis-trans isomerase (198 aa).

Positions 14–195 (NEIKVAMHTN…HDVVIESIDV (182 aa)) constitute a PPIase cyclophilin-type domain.

Belongs to the cyclophilin-type PPIase family.

It catalyses the reaction [protein]-peptidylproline (omega=180) = [protein]-peptidylproline (omega=0). Functionally, PPIases accelerate the folding of proteins. It catalyzes the cis-trans isomerization of proline imidic peptide bonds in oligopeptides. In Staphylococcus haemolyticus (strain JCSC1435), this protein is Putative peptidyl-prolyl cis-trans isomerase.